The primary structure comprises 242 residues: Pyridoxine 5'-phosphate synthase (242 aa).

Asn9 is a 3-amino-2-oxopropyl phosphate binding site. 11 to 12 (DH) lines the 1-deoxy-D-xylulose 5-phosphate pocket. Arg20 provides a ligand contact to 3-amino-2-oxopropyl phosphate. Residue His45 is the Proton acceptor of the active site. 1-deoxy-D-xylulose 5-phosphate contacts are provided by Arg47 and His52. Residue Glu72 is the Proton acceptor of the active site. Residue Thr102 coordinates 1-deoxy-D-xylulose 5-phosphate. Residue His193 is the Proton donor of the active site. Residues Gly194 and 215 to 216 (GH) contribute to the 3-amino-2-oxopropyl phosphate site.

The protein belongs to the PNP synthase family. Homooctamer; tetramer of dimers.

Its subcellular location is the cytoplasm. It carries out the reaction 3-amino-2-oxopropyl phosphate + 1-deoxy-D-xylulose 5-phosphate = pyridoxine 5'-phosphate + phosphate + 2 H2O + H(+). It functions in the pathway cofactor biosynthesis; pyridoxine 5'-phosphate biosynthesis; pyridoxine 5'-phosphate from D-erythrose 4-phosphate: step 5/5. In terms of biological role, catalyzes the complicated ring closure reaction between the two acyclic compounds 1-deoxy-D-xylulose-5-phosphate (DXP) and 3-amino-2-oxopropyl phosphate (1-amino-acetone-3-phosphate or AAP) to form pyridoxine 5'-phosphate (PNP) and inorganic phosphate. This chain is Pyridoxine 5'-phosphate synthase, found in Idiomarina loihiensis (strain ATCC BAA-735 / DSM 15497 / L2-TR).